Consider the following 319-residue polypeptide: Oxaloacetate tautomerase fahd2, mitochondrial (319 aa).

Residues 1-31 constitute a mitochondrion transit peptide; the sequence is MLTQTRVALRVLKNAHLTLPKRNISQSPALS. 3 residues coordinate Mg(2+): glutamate 164, glutamate 166, and aspartate 195.

It belongs to the FAH family. The cofactor is Mg(2+). Requires Mn(2+) as cofactor.

The protein localises to the mitochondrion. The enzyme catalyses oxaloacetate = enol-oxaloacetate. Its function is as follows. Tautomerase that converts enol-oxaloacetate, a strong inhibitor of succinate dehydrogenase, to the physiological keto form of oxaloacetate. It is thereby required to maximize aerobic respiration efficiency by preventing succinate dehydrogenase inhibition. This Xenopus laevis (African clawed frog) protein is Oxaloacetate tautomerase fahd2, mitochondrial (fahd2).